Here is a 166-residue protein sequence, read N- to C-terminus: Lipoprotein signal peptidase (166 aa).

4 helical membrane passes run 10-30 (GGALAPWLGISLIVILFDQLT), 32-52 (IAVLKTFAYGAMHALTPFFNL), 71-91 (WQRWAFTALGIGATLVICYLL), and 100-120 (FSLSLALILGGALGNVIDRLI). Active-site residues include Asp-126 and Asp-144. Residues 135 to 155 (WHWPAFNLADSAITVGAVLLI) traverse the membrane as a helical segment.

It belongs to the peptidase A8 family.

Its subcellular location is the cell inner membrane. The enzyme catalyses Release of signal peptides from bacterial membrane prolipoproteins. Hydrolyzes -Xaa-Yaa-Zaa-|-(S,diacylglyceryl)Cys-, in which Xaa is hydrophobic (preferably Leu), and Yaa (Ala or Ser) and Zaa (Gly or Ala) have small, neutral side chains.. It participates in protein modification; lipoprotein biosynthesis (signal peptide cleavage). In terms of biological role, this protein specifically catalyzes the removal of signal peptides from prolipoproteins. The polypeptide is Lipoprotein signal peptidase (Burkholderia mallei (strain ATCC 23344)).